Consider the following 150-residue polypeptide: Ribonuclease pancreatic delta-type (150 aa).

The N-terminal stretch at M1–G25 is a signal peptide. R35 contributes to the substrate binding site. The Proton acceptor role is filled by H37. 4 disulfide bridges follow: C51-C110, C65-C121, C83-C136, and C90-C98. Residues K66 to T70, K91, and R111 each bind substrate. H145 (proton donor) is an active-site residue.

The protein belongs to the pancreatic ribonuclease family. Monomer.

It localises to the secreted. The enzyme catalyses an [RNA] containing cytidine + H2O = an [RNA]-3'-cytidine-3'-phosphate + a 5'-hydroxy-ribonucleotide-3'-[RNA].. The catalysed reaction is an [RNA] containing uridine + H2O = an [RNA]-3'-uridine-3'-phosphate + a 5'-hydroxy-ribonucleotide-3'-[RNA].. In terms of biological role, endonuclease that catalyzes the cleavage of RNA on the 3' side of pyrimidine nucleotides. Acts on single-stranded and double-stranded RNA. The protein is Ribonuclease pancreatic delta-type of Rattus exulans (Polynesian rat).